The sequence spans 293 residues: Ribosomal protein L11 methyltransferase (293 aa).

Threonine 145, glycine 166, aspartate 188, and asparagine 230 together coordinate S-adenosyl-L-methionine.

This sequence belongs to the methyltransferase superfamily. PrmA family.

The protein localises to the cytoplasm. It catalyses the reaction L-lysyl-[protein] + 3 S-adenosyl-L-methionine = N(6),N(6),N(6)-trimethyl-L-lysyl-[protein] + 3 S-adenosyl-L-homocysteine + 3 H(+). Functionally, methylates ribosomal protein L11. The chain is Ribosomal protein L11 methyltransferase from Shewanella pealeana (strain ATCC 700345 / ANG-SQ1).